Here is a 255-residue protein sequence, read N- to C-terminus: 3-dehydroquinate dehydratase (255 aa).

Residues E47 to R49 and R83 contribute to the 3-dehydroquinate site. Catalysis depends on H145, which acts as the Proton donor/acceptor. K172 acts as the Schiff-base intermediate with substrate in catalysis. The 3-dehydroquinate site is built by R215, S234, and Q238.

The protein belongs to the type-I 3-dehydroquinase family. Homodimer.

The catalysed reaction is 3-dehydroquinate = 3-dehydroshikimate + H2O. The protein operates within metabolic intermediate biosynthesis; chorismate biosynthesis; chorismate from D-erythrose 4-phosphate and phosphoenolpyruvate: step 3/7. Involved in the third step of the chorismate pathway, which leads to the biosynthesis of aromatic amino acids. Catalyzes the cis-dehydration of 3-dehydroquinate (DHQ) and introduces the first double bond of the aromatic ring to yield 3-dehydroshikimate. This chain is 3-dehydroquinate dehydratase, found in Clostridium kluyveri (strain NBRC 12016).